Here is a 36-residue protein sequence, read N- to C-terminus: Asteropin-A (36 aa).

Disulfide bonds link Cys-2/Cys-18, Cys-9/Cys-25, and Cys-17/Cys-35.

Its function is as follows. Sialidase inhibitor. Competitively inhibits bacterial sialidases, but not viral sialidases. Does not inhibit glycosidases or proteases. Has no antitumor activity. This chain is Asteropin-A, found in Asteropus simplex (Marine sponge).